The primary structure comprises 105 residues: uncharacterized protein (105 aa).

To C.jejuni CJ1463.

This is an uncharacterized protein from Helicobacter pylori (strain ATCC 700392 / 26695) (Campylobacter pylori).